The following is a 218-amino-acid chain: TPA-induced transmembrane protein homolog (218 aa).

Positions 1–54 are disordered; it reads MEEGSRSQSPREELELSMLDGPQEELTPLNNDLRIQPNSAEDPSPAQVGKESPW. The chain crosses the membrane as a helical span at residues 66-86; sequence KLWMVIVTIFLCFIIVIVISL.

It localises to the endoplasmic reticulum membrane. The protein is TPA-induced transmembrane protein homolog of Mus musculus (Mouse).